The sequence spans 268 residues: Type-5 uracil-DNA glycosylase (268 aa).

Positions 1–29 (MHPKTGRAFRSPVEPGSGWPGDPATPQTP) are disordered. Residues C57, C60, C161, and C176 each coordinate [4Fe-4S] cluster.

It belongs to the uracil-DNA glycosylase (UDG) superfamily. Type 5 (UDGb) family.

Functionally, DNA glycosylase with broad substrate specificity. The chain is Type-5 uracil-DNA glycosylase from Mycobacterium bovis (strain ATCC BAA-935 / AF2122/97).